The chain runs to 883 residues: Glutamate receptor 2 (883 aa).

A signal peptide spans 1 to 24 (MQKIMHISVLLSPVLWGLIFGVSS). The Extracellular segment spans residues 25–543 (NSIQIGGLFP…GVFSFLDPLA (519 aa)). The cysteines at positions 78 and 330 are disulfide-linked. N256, N370, N406, and N413 each carry an N-linked (GlcNAc...) asparagine glycan. L-glutamate contacts are provided by P499, T501, and R506. Residues 544–564 (YEIWMCIVFAYIGVSVVLFLV) form a helical membrane-spanning segment. The Cytoplasmic segment spans residues 565–591 (SRFSPYEWHTEEFEDGRETQSSESTNE). The helical; Pore-forming intramembrane region spans 592-607 (FGIFNSLWFSLGAFMQ). The stretch at 608-610 (QGC) is an intramembrane region. C610 is lipidated: S-palmitoyl cysteine. The Cytoplasmic segment spans residues 611–616 (DISPRS). Residues 617-637 (LSGRIVGGVWWFFTLIIISSY) traverse the membrane as a helical segment. Residues 638–812 (TANLAAFLTV…EKTSALSLSN (175 aa)) are Extracellular-facing. Positions 675 and 676 each coordinate L-glutamate. S683 bears the Phosphoserine; by PKC mark. Phosphoserine; by PKG is present on S717. Residue E726 coordinates L-glutamate. Cysteines 739 and 794 form a disulfide. The helical transmembrane segment at 813-833 (VAGVFYILVGGLGLAMLVALI) threads the bilayer. Residues 834–883 (EFCYKSRAEAKRMKVAKNAQNINPSSSQNSQNFATYKEGYNVYGIESVKI) lie on the Cytoplasmic side of the membrane. C836 carries S-palmitoyl cysteine lipidation. S860 and S863 each carry phosphoserine. Residues 867 to 877 (ATYKEGYNVYG) form a required for interaction with IQSEC1 region. Y876 carries the post-translational modification Phosphotyrosine. A Phosphoserine modification is found at S880.

This sequence belongs to the glutamate-gated ion channel (TC 1.A.10.1) family. GRIA2 subfamily. In terms of assembly, homotetramer or heterotetramer of pore-forming glutamate receptor subunits. Tetramers may be formed by the dimerization of dimers. May interact with MPP4. Forms a ternary complex with GRIP1 and CSPG4. Interacts with ATAD1 in an ATP-dependent manner. ATAD1-catalyzed ATP hydrolysis disrupts binding to ATAD1 and to GRIP1 and leads to AMPAR complex disassembly. Interacts with GRIP1 and GRIP2. Interacts with NSF via its C-terminus. Isoform 1, but not isoform 3, interacts with PICK1. Interacts with CACNG2. Interacts with GRIA1 and SYNDIG1. Part of a complex containing GRIA2, NSF and NAPA and/or NAPB. Interacts with SNX27 (via PDZ domain); the interaction is required for recycling to the plasma membrane when endocytosed and prevent degradation in lysosomes. Interacts with LRFN1. Found in a complex with GRIA1, GRIA3, GRIA4, CNIH2, CNIH3, CACNG2, CACNG3, CACNG4, CACNG5, CACNG7 and CACNG8. Interacts with CACNG5. Interacts with OLFM2. Interacts with AP4B1, AP4E1 and AP4M1; probably indirect it mediates the somatodendritic localization of GRIA2 in neurons. Forms a complex with GRIP1, NSG1 and STX12; controls the intracellular fate of AMPAR and the endosomal sorting of the GRIA2 subunit toward recycling and membrane targeting. Interacts with IQSEC1; the interaction is required for ARF6 activation. Interacts (heterotetramer form) with CNIH2 and CNIH3; this interaction promotes expression at the plasma membrane and extensively modulates their gating properties by slowing deactivation and desensitization kinetics. Palmitoylated. Depalmitoylated upon L-glutamate stimulation. ZDHHC3/GODZ specifically palmitoylates Cys-610, which leads to Golgi retention and decreased cell surface expression. In contrast, Cys-836 palmitoylation does not affect cell surface expression but regulates stimulation-dependent endocytosis. In terms of processing, N-glycosylated. Post-translationally, ubiquitinated by RNF167, leading to its degradation. Phosphorylation at Tyr-876 is required for interaction with IQSEC1 and ARF6 activation, which in turn triggers AMPAR internalization for persistent synaptic depression. In terms of tissue distribution, detected in brain cortex, hippocampus and cerebellum (at protein level). Detected in hippocampus.

Its subcellular location is the cell membrane. It localises to the postsynaptic cell membrane. The protein localises to the postsynaptic density membrane. It carries out the reaction Ca(2+)(in) = Ca(2+)(out). The catalysed reaction is Na(+)(in) = Na(+)(out). Its function is as follows. Ionotropic glutamate receptor that functions as a ligand-gated cation channel, gated by L-glutamate and glutamatergic agonists such as alpha-amino-3-hydroxy-5-methyl-4-isoxazolepropionic acid (AMPA), quisqualic acid, and kainic acid. L-glutamate acts as an excitatory neurotransmitter at many synapses in the central nervous system and plays an important role in fast excitatory synaptic transmission. Binding of the excitatory neurotransmitter L-glutamate induces a conformation change, leading to the opening of the cation channel, and thereby converts the chemical signal to an electrical impulse upon entry of monovalent and divalent cations such as sodium and calcium. The receptor then desensitizes rapidly and enters in a transient inactive state, characterized by the presence of bound agonist. In the presence of CACNG4 or CACNG7 or CACNG8, shows resensitization which is characterized by a delayed accumulation of current flux upon continued application of L-glutamate. Through complex formation with NSG1, GRIP1 and STX12 controls the intracellular fate of AMPAR and the endosomal sorting of the GRIA2 subunit toward recycling and membrane targeting. This is Glutamate receptor 2 from Mus musculus (Mouse).